Here is a 299-residue protein sequence, read N- to C-terminus: 4-diphosphocytidyl-2-C-methyl-D-erythritol kinase (299 aa).

The active site involves Lys11. 94–104 (PQGGGLGGGSS) lines the ATP pocket. Residue Asp136 is part of the active site.

The protein belongs to the GHMP kinase family. IspE subfamily.

It carries out the reaction 4-CDP-2-C-methyl-D-erythritol + ATP = 4-CDP-2-C-methyl-D-erythritol 2-phosphate + ADP + H(+). It functions in the pathway isoprenoid biosynthesis; isopentenyl diphosphate biosynthesis via DXP pathway; isopentenyl diphosphate from 1-deoxy-D-xylulose 5-phosphate: step 3/6. Catalyzes the phosphorylation of the position 2 hydroxy group of 4-diphosphocytidyl-2C-methyl-D-erythritol. The polypeptide is 4-diphosphocytidyl-2-C-methyl-D-erythritol kinase (Bordetella parapertussis (strain 12822 / ATCC BAA-587 / NCTC 13253)).